A 960-amino-acid polypeptide reads, in one-letter code: Isoleucine--tRNA ligase (960 aa).

The short motif at 60 to 70 is the 'HIGH' region element; it reads PYANGSLHIGH. Residue glutamate 573 participates in L-isoleucyl-5'-AMP binding. The 'KMSKS' region signature appears at 614 to 618; sequence KMSKS. Lysine 617 lines the ATP pocket. Cysteine 929, cysteine 932, cysteine 949, and cysteine 952 together coordinate Zn(2+).

Belongs to the class-I aminoacyl-tRNA synthetase family. IleS type 1 subfamily. Monomer. Zn(2+) serves as cofactor.

The protein localises to the cytoplasm. The catalysed reaction is tRNA(Ile) + L-isoleucine + ATP = L-isoleucyl-tRNA(Ile) + AMP + diphosphate. Its function is as follows. Catalyzes the attachment of isoleucine to tRNA(Ile). As IleRS can inadvertently accommodate and process structurally similar amino acids such as valine, to avoid such errors it has two additional distinct tRNA(Ile)-dependent editing activities. One activity is designated as 'pretransfer' editing and involves the hydrolysis of activated Val-AMP. The other activity is designated 'posttransfer' editing and involves deacylation of mischarged Val-tRNA(Ile). The chain is Isoleucine--tRNA ligase from Nostoc sp. (strain PCC 7120 / SAG 25.82 / UTEX 2576).